A 591-amino-acid polypeptide reads, in one-letter code: Aspartate--tRNA(Asp/Asn) ligase (591 aa).

Glu-174 contributes to the L-aspartate binding site. The segment at 198-201 (QLFK) is aspartate. Arg-220 contacts L-aspartate. Residues 220–222 (RDE) and Gln-229 each bind ATP. His-450 serves as a coordination point for L-aspartate. ATP is bound at residue Glu-483. Arg-490 contacts L-aspartate. 535–538 (GLDR) provides a ligand contact to ATP.

The protein belongs to the class-II aminoacyl-tRNA synthetase family. Type 1 subfamily. In terms of assembly, homodimer.

It localises to the cytoplasm. The catalysed reaction is tRNA(Asx) + L-aspartate + ATP = L-aspartyl-tRNA(Asx) + AMP + diphosphate. Its function is as follows. Aspartyl-tRNA synthetase with relaxed tRNA specificity since it is able to aspartylate not only its cognate tRNA(Asp) but also tRNA(Asn). Reaction proceeds in two steps: L-aspartate is first activated by ATP to form Asp-AMP and then transferred to the acceptor end of tRNA(Asp/Asn). The chain is Aspartate--tRNA(Asp/Asn) ligase from Pseudomonas putida (strain W619).